The sequence spans 305 residues: MQSPHIPVLLQEVLDAFDDFDSGDFLDCTLGYGGHSKALLQAHEKLRLIACDKDLEALNFSKEFLKKFQDRISFNHIGFKDILTQIPTQNLRGILADIGVSSLQLDKNDRGFSLNSDFLDMRMDQNNLLSAKEVVNSYSKEALEQIFKDYGDLAPVASMLTQKIINARSQKEITSAKELSQIIGNAKLKGRNVSLALLVFQALRIEVNNELGELKSLLENIEKAKLKDCKLAIISFHSLEDRIVKNTFKRWEKDCICDERAIKCECGKGHSLGKILSKKAISASKEEISYNSRSSCAKMRIFYFR.

S-adenosyl-L-methionine is bound by residues 33–35 (GGH), aspartate 52, aspartate 97, and glutamine 104.

It belongs to the methyltransferase superfamily. RsmH family.

It is found in the cytoplasm. The enzyme catalyses cytidine(1402) in 16S rRNA + S-adenosyl-L-methionine = N(4)-methylcytidine(1402) in 16S rRNA + S-adenosyl-L-homocysteine + H(+). In terms of biological role, specifically methylates the N4 position of cytidine in position 1402 (C1402) of 16S rRNA. This Campylobacter lari (strain RM2100 / D67 / ATCC BAA-1060) protein is Ribosomal RNA small subunit methyltransferase H.